The primary structure comprises 116 residues: Large ribosomal subunit protein bL17 (116 aa).

Belongs to the bacterial ribosomal protein bL17 family. As to quaternary structure, part of the 50S ribosomal subunit. Contacts protein L32.

This is Large ribosomal subunit protein bL17 from Prochlorococcus marinus (strain NATL2A).